A 254-amino-acid chain; its full sequence is 4-hydroxy-tetrahydrodipicolinate reductase (254 aa).

7-12 contacts NAD(+); it reads GASGRI. Position 35 (Arg-35) interacts with NADP(+). NAD(+)-binding positions include 91-93 and 115-118; these read GTT and AHNM. His-147 (proton donor/acceptor) is an active-site residue. Position 148 (His-148) interacts with (S)-2,3,4,5-tetrahydrodipicolinate. Lys-151 (proton donor) is an active-site residue. 157–158 contributes to the (S)-2,3,4,5-tetrahydrodipicolinate binding site; that stretch reads GT.

The protein belongs to the DapB family.

The protein localises to the cytoplasm. It carries out the reaction (S)-2,3,4,5-tetrahydrodipicolinate + NAD(+) + H2O = (2S,4S)-4-hydroxy-2,3,4,5-tetrahydrodipicolinate + NADH + H(+). The catalysed reaction is (S)-2,3,4,5-tetrahydrodipicolinate + NADP(+) + H2O = (2S,4S)-4-hydroxy-2,3,4,5-tetrahydrodipicolinate + NADPH + H(+). It participates in amino-acid biosynthesis; L-lysine biosynthesis via DAP pathway; (S)-tetrahydrodipicolinate from L-aspartate: step 4/4. In terms of biological role, catalyzes the conversion of 4-hydroxy-tetrahydrodipicolinate (HTPA) to tetrahydrodipicolinate. The polypeptide is 4-hydroxy-tetrahydrodipicolinate reductase (Helicobacter pylori (strain ATCC 700392 / 26695) (Campylobacter pylori)).